The following is an 849-amino-acid chain: Pre-mRNA-processing ATP-dependent RNA helicase PRP5 (849 aa).

The stretch at 13–81 (ESLLEERRKK…RKRKNEFRKS (69 aa)) forms a coiled coil. The segment at 28-138 (QKKAQFDAQK…PEHDNEKDPL (111 aa)) is disordered. The span at 38–54 (ENQTSRNDIVTNSLEGK) shows a compositional bias: polar residues. Over residues 55 to 85 (QTTEKFTERQERVKEELRKRKNEFRKSDEPV) the composition is skewed to basic and acidic residues. Residues 89 to 102 (PSKKKSKRSKVKKK) are compositionally biased toward basic residues. Over residues 120–138 (RSKEHIQKVPEHDNEKDPL) the composition is skewed to basic and acidic residues. The Q motif motif lies at 255 to 284 (TKWSQLGLSTDTMVLITEKLHFGSLTPIQS). Positions 287-467 (LPAIMSGRDV…VRVLHSPISI (181 aa)) constitute a Helicase ATP-binding domain. 300–307 (SKTGSGKT) contributes to the ATP binding site. A DEAD box motif is present at residues 415–418 (DEAD). Residues 502–661 (ERSEFFDEVQ…LDPLQAKELQ (160 aa)) enclose the Helicase C-terminal domain. Residues 689–728 (NIKSKREEAQNKDLELKKNDKRSDDLEKKINNPHEGHDSE) show a composition bias toward basic and acidic residues. The disordered stretch occupies residues 689–731 (NIKSKREEAQNKDLELKKNDKRSDDLEKKINNPHEGHDSEPES).

This sequence belongs to the DEAD box helicase family. DDX46/PRP5 subfamily. In terms of assembly, interacts with the U2 snRNP and HSH155.

The protein localises to the nucleus. It carries out the reaction ATP + H2O = ADP + phosphate + H(+). ATP-dependent RNA helicase involved spliceosome assembly and in nuclear splicing. Catalyzes an ATP-dependent conformational change of U2 snRNP. Bridges U1 and U2 snRNPs and enables stable U2 snRNP association with intron RNA. The polypeptide is Pre-mRNA-processing ATP-dependent RNA helicase PRP5 (PRP5) (Saccharomyces cerevisiae (strain YJM789) (Baker's yeast)).